The chain runs to 716 residues: Protein C-mannosyl-transferase DPY19L3 (716 aa).

Residues 1 to 43 (MMYIRQRKETKPIEVSEDFPSPKEDVKLEKKLPSGCASGRFWK) lie on the Cytoplasmic side of the membrane. The helical transmembrane segment at 44–64 (ILSSAVGGTVALCIGLLTSVY) threads the bilayer. Topologically, residues 65-154 (LATLHENDLW…RVLPIQKYLE (90 aa)) are lumenal. N-linked (GlcNAc...) asparagine glycosylation occurs at asparagine 118. A helical membrane pass occupies residues 155–182 (PVYFYIYTLFGLQAVYVTALYITSWLLS). Residues 183–184 (GT) lie on the Cytoplasmic side of the membrane. Positions 185–197 (WLSGLLAALWYVT) form an intramembrane region, name=3. At 198 to 215 (NRIDTTRVEFTIPLRENW) the chain is on the cytoplasmic side. An intramembrane region (name=4) is located at residues 216–230 (ALPFFAIQIAAITYF). Over 231-239 (LRPNLQPLS) the chain is Cytoplasmic. The chain crosses the membrane as a helical span at residues 240–256 (ERLTLLAIFVSTFLFSL). Residues 257-262 (TWQFNQ) lie on the Lumenal side of the membrane. Residues 263–279 (FMMLLQALVLFILDSLD) traverse the membrane as a helical segment. Residues 280–289 (MLPAMKATWL) lie on the Cytoplasmic side of the membrane. Residues 290–306 (YGIQISCLLLVCTLQFF) traverse the membrane as a helical segment. At 307 to 308 (NS) the chain is on the lumenal side. A helical membrane pass occupies residues 309 to 323 (MILGSLLISFNLSVL). The Cytoplasmic segment spans residues 324–338 (IVRKLQKNLKTGSFL). The helical transmembrane segment at 339–359 (TRIWKLLLHLLLVFCLTLFLN) threads the bilayer. Topologically, residues 360–414 (NIIKKVLNLKSDEHIFKFLKAKFGFGATRDFDANLYLCEEAFGLLPLNTFQRLSE) are lumenal. The chain crosses the membrane as a helical span at residues 415 to 437 (TLLFYAYMFVLVVTVVTASVVAF). The Cytoplasmic segment spans residues 438 to 465 (HNLSDSTSLKSMDQTRKRAVDLKPEAAY). The helical transmembrane segment at 466–485 (NLIHTILFGVLALSTMRMKY) threads the bilayer. Over 486–487 (LW) the chain is Lumenal. A helical transmembrane segment spans residues 488-499 (TSHMCVFASFGL). The Cytoplasmic segment spans residues 500 to 522 (CSSEVWELLLRLVHLCNPKRIWV). The chain crosses the membrane as a helical span at residues 523–539 (LRYLVPVLTLLYLCYKS). At 540 to 716 (WPGVMDELSE…FHVYKLSRNK (177 aa)) the chain is on the lumenal side. Asparagine 704 carries an N-linked (GlcNAc...) asparagine glycan.

This sequence belongs to the dpy-19 family.

The protein resides in the endoplasmic reticulum membrane. The catalysed reaction is L-tryptophyl-[protein] + a di-trans,poly-cis-dolichyl beta-D-mannosyl phosphate = C-alpha-D-mannosyl-L-tryptophyl-[protein] + a di-trans,poly-cis-dolichyl phosphate + H(+). Its pathway is protein modification; protein glycosylation. C-mannosyltransferase that mediates C-mannosylation of tryptophan residues on target proteins. The reaction occurs on the luminal side of the endoplasmic reticulum and involves the transfer of a mannose unit from a dolichylphosphate mannose (Dol-P-Man) donor to an acceptor protein containing a WxxW or WxxC consensus sequence. C-mannosylates RSPO1, a Wnt signaling regulator, preferentially at the first Trp residue in the sequence WxxW. C-mannosylates the netrin receptor UNC5A, preferentially at the third tryptophan of WxxWxxWxxC sequence. The protein is Protein C-mannosyl-transferase DPY19L3 (Dpy19l3) of Mus musculus (Mouse).